A 322-amino-acid polypeptide reads, in one-letter code: MLRMLKRQQLHPGMILLLFWLCYLIEDQKVQAGNCWLQQGKNGRCQVLYMPGMSREECCRSGRLGTSWTEEDVPNSTLFRWMIFNGGAPNCIPCKETCDNVDCGPGKRCKMNRRSKPRCVCAPDCSNVTWKGPVCGSDGKTYRDECALLKSKCKGHPDLEVQYQGKCKKTCRDVLCPGSSTCVVDQTNNAYCVTCNRICPEVMSPDQYLCGNDGIVYASACHLRRATCLLGRSIGVAYEGKCIKAKSCDDIHCSAGKKCLWDAKMSRGRCAVCAESCPESRSEEAVCASDNTTYPSECAMKQAACSLGVLLEVKHSGSCNCK.

An N-terminal signal peptide occupies residues 1 to 32 (MLRMLKRQQLHPGMILLLFWLCYLIEDQKVQA). Residues 33–106 (GNCWLQQGKN…TCDNVDCGPG (74 aa)) form the TB domain. 8 disulfide bridges follow: cysteine 35/cysteine 58, cysteine 45/cysteine 91, cysteine 59/cysteine 94, cysteine 98/cysteine 109, cysteine 103/cysteine 119, cysteine 121/cysteine 153, cysteine 125/cysteine 146, and cysteine 135/cysteine 167. Asparagine 75 carries an N-linked (GlcNAc...) asparagine glycan. Residues 97–120 (TCDNVDCGPGKRCKMNRRSKPRCV) form the Follistatin-like 1 domain. 3 Kazal-like domains span residues 103–169 (CGPG…KCKK), 189–244 (NAYC…KCIK), and 267–321 (RGRC…SCNC). Asparagine 127 is a glycosylation site (N-linked (GlcNAc...) asparagine). Positions 170-193 (TCRDVLCPGSSTCVVDQTNNAYCV) constitute a Follistatin-like 2 domain. Disulfide bonds link cysteine 195–cysteine 228, cysteine 199–cysteine 221, and cysteine 210–cysteine 242. Residues 247-271 (SCDDIHCSAGKKCLWDAKMSRGRCA) form the Follistatin-like 3 domain. 3 disulfides stabilise this stretch: cysteine 273-cysteine 305, cysteine 277-cysteine 298, and cysteine 287-cysteine 319. Residue asparagine 291 is glycosylated (N-linked (GlcNAc...) asparagine).

Monomer. In terms of tissue distribution, not expressed in the organizer region. Expression in gastrulating embryos is confined to anterior and paraxial regions, which give rise to head mesoderm and the first five somites. In addition, expressed transiently in a subset of cells in the posterior notochord anlage. Later, expression is seen in brain, eyes and somites.

In terms of biological role, binds directly to activin and functions as an activin antagonist. Specific inhibitor of the biosynthesis and secretion of pituitary follicle stimulating hormone (fsh). Inhibits bmp-signaling during later stages of development including late phases of dorsoventral patterning, to refine the early pattern set up by the interaction of chordino and bmp2/4. Not involved in organizer function or early phases of dorsoventral pattern formation. The polypeptide is Follistatin-A (fsta) (Danio rerio (Zebrafish)).